The chain runs to 257 residues: Putative B3 domain-containing protein At2g27410 (257 aa).

Residues 5–50 (ARTTKINHFRGTSTTQNPNRGLEPSPSSYVTRRSKEKRPINVEKRS) are disordered. Over residues 8 to 35 (TKINHFRGTSTTQNPNRGLEPSPSSYVT) the composition is skewed to polar residues. Positions 115 to 209 (TPDFLTEDET…KLCFALTPKN (95 aa)) form a DNA-binding region, TF-B3. The disordered stretch occupies residues 212 to 257 (RGNSLPGGDGASTSGESGQVPLPIPPARYSSNSGQGCSGESSSSSS). Over residues 241–257 (SSNSGQGCSGESSSSSS) the composition is skewed to low complexity.

The protein resides in the nucleus. This Arabidopsis thaliana (Mouse-ear cress) protein is Putative B3 domain-containing protein At2g27410.